Reading from the N-terminus, the 186-residue chain is C-type lectin 37Da (186 aa).

The N-terminal stretch at M1–G20 is a signal peptide. 2 N-linked (GlcNAc...) asparagine glycosylation sites follow: N35 and N47. In terms of domain architecture, C-type lectin spans I46–K169. Cysteines 140 and 160 form a disulfide.

It is found in the secreted. Its function is as follows. Galactose-specific lectin that displays calcium-dependent activity. Binds to the surface of hemocytes and enhances hemocyte encapsulation and melanization. This is likely by interacting with carbohydrates on the surface of the hemocytes. Also displays agglutination activity against the Gram-negative bacterium E.coli. In Drosophila melanogaster (Fruit fly), this protein is C-type lectin 37Da.